A 245-amino-acid chain; its full sequence is Serine/arginine-rich splicing factor 1B (245 aa).

The region spanning 15 to 90 is the RRM 1 domain; sequence CRIYVGNLPP…YRLRVEFPRS (76 aa). 2 disordered regions span residues 89–116 and 192–245; these read RSGR…PPSR and KVDG…RSRT. Residues 91-106 show a composition bias toward gly residues; the sequence is GRGGGRGGGGGGGVGA. Residues 120–194 form the RRM 2 domain; it reads YRVIVSGLPP…ETAYIRVKVD (75 aa). The span at 204 to 245 shows a compositional bias: basic residues; that stretch reads SRSRSRSRSRSRSNSRSRSYSPRRSRGSPRYSPRHSRSRSRT.

It belongs to the splicing factor SR family.

The protein resides in the cytoplasm. It is found in the nucleus speckle. May play a role in preventing exon skipping, ensuring the accuracy of splicing and regulating alternative splicing. The sequence is that of Serine/arginine-rich splicing factor 1B (srsf1b) from Danio rerio (Zebrafish).